Here is a 245-residue protein sequence, read N- to C-terminus: Octanoyltransferase (245 aa).

One can recognise a BPL/LPL catalytic domain in the interval 54–238; the sequence is GEATELVWLL…AFENIFGETR (185 aa). Substrate is bound by residues 92-99, 167-169, and 180-182; these read RGGQLTYH, AIG, and GIA. The active-site Acyl-thioester intermediate is Cys-198.

This sequence belongs to the LipB family.

It localises to the cytoplasm. The enzyme catalyses octanoyl-[ACP] + L-lysyl-[protein] = N(6)-octanoyl-L-lysyl-[protein] + holo-[ACP] + H(+). It functions in the pathway protein modification; protein lipoylation via endogenous pathway; protein N(6)-(lipoyl)lysine from octanoyl-[acyl-carrier-protein]: step 1/2. Its function is as follows. Catalyzes the transfer of endogenously produced octanoic acid from octanoyl-acyl-carrier-protein onto the lipoyl domains of lipoate-dependent enzymes. Lipoyl-ACP can also act as a substrate although octanoyl-ACP is likely to be the physiological substrate. In Rhodopseudomonas palustris (strain TIE-1), this protein is Octanoyltransferase.